Here is a 456-residue protein sequence, read N- to C-terminus: Bifunctional protein GlmU (456 aa).

The tract at residues 1–229 (MLNNTMSVVI…ISETDGVNNR (229 aa)) is pyrophosphorylase. Residues 11–14 (LAAG), K25, Q76, 81–82 (GT), 103–105 (YGD), G140, E154, N169, and N227 contribute to the UDP-N-acetyl-alpha-D-glucosamine site. D105 is a Mg(2+) binding site. Residue N227 participates in Mg(2+) binding. Residues 230–250 (LQLSRLERIYQAEQAEKLLLA) are linker. Residues 251-456 (GVMLRDPARF…QGWQRPVKKK (206 aa)) form an N-acetyltransferase region. The UDP-N-acetyl-alpha-D-glucosamine site is built by R333 and K351. The active-site Proton acceptor is H363. Residues Y366 and N377 each contribute to the UDP-N-acetyl-alpha-D-glucosamine site. Acetyl-CoA-binding positions include A380, 386–387 (NY), S405, A423, and R440.

The protein in the N-terminal section; belongs to the N-acetylglucosamine-1-phosphate uridyltransferase family. In the C-terminal section; belongs to the transferase hexapeptide repeat family. Homotrimer. Mg(2+) is required as a cofactor.

The protein localises to the cytoplasm. The catalysed reaction is alpha-D-glucosamine 1-phosphate + acetyl-CoA = N-acetyl-alpha-D-glucosamine 1-phosphate + CoA + H(+). It catalyses the reaction N-acetyl-alpha-D-glucosamine 1-phosphate + UTP + H(+) = UDP-N-acetyl-alpha-D-glucosamine + diphosphate. Its pathway is nucleotide-sugar biosynthesis; UDP-N-acetyl-alpha-D-glucosamine biosynthesis; N-acetyl-alpha-D-glucosamine 1-phosphate from alpha-D-glucosamine 6-phosphate (route II): step 2/2. The protein operates within nucleotide-sugar biosynthesis; UDP-N-acetyl-alpha-D-glucosamine biosynthesis; UDP-N-acetyl-alpha-D-glucosamine from N-acetyl-alpha-D-glucosamine 1-phosphate: step 1/1. It functions in the pathway bacterial outer membrane biogenesis; LPS lipid A biosynthesis. In terms of biological role, catalyzes the last two sequential reactions in the de novo biosynthetic pathway for UDP-N-acetylglucosamine (UDP-GlcNAc). The C-terminal domain catalyzes the transfer of acetyl group from acetyl coenzyme A to glucosamine-1-phosphate (GlcN-1-P) to produce N-acetylglucosamine-1-phosphate (GlcNAc-1-P), which is converted into UDP-GlcNAc by the transfer of uridine 5-monophosphate (from uridine 5-triphosphate), a reaction catalyzed by the N-terminal domain. This chain is Bifunctional protein GlmU, found in Enterobacter sp. (strain 638).